Reading from the N-terminus, the 90-residue chain is Progonadoliberin-1 (90 aa).

Positions 1–24 are cleaved as a signal peptide; sequence MSRHVTVVLLLAIVLLLSSHMIHG. Q25 is subject to Pyrrolidone carboxylic acid. The residue at position 34 (G34) is a Glycine amide.

This sequence belongs to the GnRH family. As to expression, forebrain.

It localises to the secreted. Stimulates the secretion of gonadotropins. This Aquarana catesbeiana (American bullfrog) protein is Progonadoliberin-1 (gnrh1).